A 254-amino-acid chain; its full sequence is Type III pantothenate kinase (254 aa).

6–13 (DVGNTNIV) lines the ATP pocket. Residue 107–110 (GADR) coordinates substrate. The active-site Proton acceptor is the D109. D129 is a K(+) binding site. T132 contributes to the ATP binding site. T184 contributes to the substrate binding site.

It belongs to the type III pantothenate kinase family. In terms of assembly, homodimer. Requires NH4(+) as cofactor. The cofactor is K(+).

The protein localises to the cytoplasm. The catalysed reaction is (R)-pantothenate + ATP = (R)-4'-phosphopantothenate + ADP + H(+). It participates in cofactor biosynthesis; coenzyme A biosynthesis; CoA from (R)-pantothenate: step 1/5. Functionally, catalyzes the phosphorylation of pantothenate (Pan), the first step in CoA biosynthesis. This Exiguobacterium sp. (strain ATCC BAA-1283 / AT1b) protein is Type III pantothenate kinase.